A 471-amino-acid chain; its full sequence is Ribulose bisphosphate carboxylase large chain (471 aa).

Lys-5 is modified (N6,N6,N6-trimethyllysine). Substrate-binding residues include Asn-114 and Thr-164. Lys-166 serves as the catalytic Proton acceptor. A substrate-binding site is contributed by Lys-168. The Mg(2+) site is built by Lys-192, Asp-194, and Glu-195. Residue Lys-192 is modified to N6-carboxylysine. His-285 (proton acceptor) is an active-site residue. Substrate-binding residues include Arg-286, His-318, and Ser-370.

The protein belongs to the RuBisCO large chain family. Type I subfamily. In terms of assembly, heterohexadecamer of 8 large chains and 8 small chains; disulfide-linked. The disulfide link is formed within the large subunit homodimers. Mg(2+) serves as cofactor. Post-translationally, the disulfide bond which can form in the large chain dimeric partners within the hexadecamer appears to be associated with oxidative stress and protein turnover.

Its subcellular location is the plastid. It is found in the chloroplast. It catalyses the reaction 2 (2R)-3-phosphoglycerate + 2 H(+) = D-ribulose 1,5-bisphosphate + CO2 + H2O. It carries out the reaction D-ribulose 1,5-bisphosphate + O2 = 2-phosphoglycolate + (2R)-3-phosphoglycerate + 2 H(+). Functionally, ruBisCO catalyzes two reactions: the carboxylation of D-ribulose 1,5-bisphosphate, the primary event in carbon dioxide fixation, as well as the oxidative fragmentation of the pentose substrate in the photorespiration process. Both reactions occur simultaneously and in competition at the same active site. This chain is Ribulose bisphosphate carboxylase large chain, found in Chiococca alba (West Indian milkberry).